The sequence spans 219 residues: RNA-3 uncharacterized 24.7 kDa protein (219 aa).

This is RNA-3 uncharacterized 24.7 kDa protein from Beta macrocarpa (Beet).